A 478-amino-acid chain; its full sequence is V-type proton ATPase subunit H (478 aa).

It belongs to the V-ATPase H subunit family. As to quaternary structure, V-ATPase is a heteromultimeric enzyme composed of a peripheral catalytic V1 complex (components A to H) attached to an integral membrane V0 proton pore complex (components: a, c, c', c'', d, e, f and VOA1). Interacts with YND1.

It is found in the vacuole membrane. In terms of biological role, subunit of the V1 complex of vacuolar(H+)-ATPase (V-ATPase), a multisubunit enzyme composed of a peripheral complex (V1) that hydrolyzes ATP and a membrane integral complex (V0) that translocates protons. V-ATPase is responsible for acidifying and maintaining the pH of intracellular compartments. This subunit is essential for activity, but not assembly, of the enzyme complex. This subunit is also required for silencing the ATPase activity of V-ATPase when V1 is detached from V0. The polypeptide is V-type proton ATPase subunit H (Saccharomyces cerevisiae (strain ATCC 204508 / S288c) (Baker's yeast)).